The primary structure comprises 108 residues: Putative pterin-4-alpha-carbinolamine dehydratase (108 aa).

The protein belongs to the pterin-4-alpha-carbinolamine dehydratase family.

It carries out the reaction (4aS,6R)-4a-hydroxy-L-erythro-5,6,7,8-tetrahydrobiopterin = (6R)-L-erythro-6,7-dihydrobiopterin + H2O. This is Putative pterin-4-alpha-carbinolamine dehydratase from Bordetella avium (strain 197N).